A 591-amino-acid polypeptide reads, in one-letter code: V-type ATP synthase alpha chain (591 aa).

242-249 (GPFGAGKT) contributes to the ATP binding site.

This sequence belongs to the ATPase alpha/beta chains family.

The catalysed reaction is ATP + H2O + 4 H(+)(in) = ADP + phosphate + 5 H(+)(out). In terms of biological role, produces ATP from ADP in the presence of a proton gradient across the membrane. The V-type alpha chain is a catalytic subunit. The protein is V-type ATP synthase alpha chain of Chlamydia caviae (strain ATCC VR-813 / DSM 19441 / 03DC25 / GPIC) (Chlamydophila caviae).